A 277-amino-acid polypeptide reads, in one-letter code: Tryptophan synthase alpha chain (277 aa).

Active-site proton acceptor residues include Glu-43 and Glu-54.

Belongs to the TrpA family. Tetramer of two alpha and two beta chains.

It carries out the reaction (1S,2R)-1-C-(indol-3-yl)glycerol 3-phosphate + L-serine = D-glyceraldehyde 3-phosphate + L-tryptophan + H2O. It participates in amino-acid biosynthesis; L-tryptophan biosynthesis; L-tryptophan from chorismate: step 5/5. Its function is as follows. The alpha subunit is responsible for the aldol cleavage of indoleglycerol phosphate to indole and glyceraldehyde 3-phosphate. This is Tryptophan synthase alpha chain from Haloferax volcanii (strain ATCC 29605 / DSM 3757 / JCM 8879 / NBRC 14742 / NCIMB 2012 / VKM B-1768 / DS2) (Halobacterium volcanii).